The chain runs to 962 residues: Glycine dehydrogenase (decarboxylating) (962 aa).

Position 710 is an N6-(pyridoxal phosphate)lysine (K710).

It belongs to the GcvP family. As to quaternary structure, the glycine cleavage system is composed of four proteins: P, T, L and H. Pyridoxal 5'-phosphate serves as cofactor.

The catalysed reaction is N(6)-[(R)-lipoyl]-L-lysyl-[glycine-cleavage complex H protein] + glycine + H(+) = N(6)-[(R)-S(8)-aminomethyldihydrolipoyl]-L-lysyl-[glycine-cleavage complex H protein] + CO2. In terms of biological role, the glycine cleavage system catalyzes the degradation of glycine. The P protein binds the alpha-amino group of glycine through its pyridoxal phosphate cofactor; CO(2) is released and the remaining methylamine moiety is then transferred to the lipoamide cofactor of the H protein. The polypeptide is Glycine dehydrogenase (decarboxylating) (Idiomarina loihiensis (strain ATCC BAA-735 / DSM 15497 / L2-TR)).